The sequence spans 118 residues: Small ribosomal subunit protein uS13 (118 aa).

The disordered stretch occupies residues 93–118; that stretch reads RGLPVRGQRTKTNARTRKGPRKPIRK.

Belongs to the universal ribosomal protein uS13 family. As to quaternary structure, part of the 30S ribosomal subunit. Forms a loose heterodimer with protein S19. Forms two bridges to the 50S subunit in the 70S ribosome.

Located at the top of the head of the 30S subunit, it contacts several helices of the 16S rRNA. In the 70S ribosome it contacts the 23S rRNA (bridge B1a) and protein L5 of the 50S subunit (bridge B1b), connecting the 2 subunits; these bridges are implicated in subunit movement. Contacts the tRNAs in the A and P-sites. This chain is Small ribosomal subunit protein uS13, found in Pseudomonas fluorescens (strain Pf0-1).